We begin with the raw amino-acid sequence, 945 residues long: Bifunctional glutamine synthetase adenylyltransferase/adenylyl-removing enzyme (945 aa).

An adenylyl removase region spans residues 1 to 441 (MLPLSAALQT…VFNDLIGDDS (441 aa)). An adenylyl transferase region spans residues 450–945 (YQHYHSLWQD…VRASWAKWLG (496 aa)).

It belongs to the GlnE family. Mg(2+) serves as cofactor.

It carries out the reaction [glutamine synthetase]-O(4)-(5'-adenylyl)-L-tyrosine + phosphate = [glutamine synthetase]-L-tyrosine + ADP. The enzyme catalyses [glutamine synthetase]-L-tyrosine + ATP = [glutamine synthetase]-O(4)-(5'-adenylyl)-L-tyrosine + diphosphate. Involved in the regulation of glutamine synthetase GlnA, a key enzyme in the process to assimilate ammonia. When cellular nitrogen levels are high, the C-terminal adenylyl transferase (AT) inactivates GlnA by covalent transfer of an adenylyl group from ATP to specific tyrosine residue of GlnA, thus reducing its activity. Conversely, when nitrogen levels are low, the N-terminal adenylyl removase (AR) activates GlnA by removing the adenylyl group by phosphorolysis, increasing its activity. The regulatory region of GlnE binds the signal transduction protein PII (GlnB) which indicates the nitrogen status of the cell. This Serratia proteamaculans (strain 568) protein is Bifunctional glutamine synthetase adenylyltransferase/adenylyl-removing enzyme.